A 344-amino-acid chain; its full sequence is Meiotic recombination protein DMC1 homolog B (344 aa).

133 to 140 (GEFRSGKT) lines the ATP pocket. Arg235 serves as a coordination point for dsDNA. 5 residues coordinate ssDNA: Arg235, Phe238, Arg241, Arg247, and Arg315. Residues Arg241 and Arg247 each coordinate dsDNA.

This sequence belongs to the RecA family. DMC1 subfamily. In terms of tissue distribution, highly expressed in spikelets. Expressed in meiotic young panicles.

It localises to the nucleus. In terms of biological role, recombinase that may participate in meiotic recombination, specifically in homologous strand assimilation, which is required for the resolution of meiotic double-strand breaks. Exhibits DNA-dependent ATPase activity when bound to single-stranded DNA (ssDNA). Mediates renaturation of homologous complementary strands as well as assimilation of single strands into homologous supercoiled duplexes leading to D-loop formation. Binds circular single-stranded DNA (ssDNA) and circular double-stranded DNA (dsDNA) in vitro. Catalyzes DNA homologous renaturation and DNA strand exchange. The rates of these activities are dependent on the state of ATP hydrolysis. Forms helical filaments along ssDNA and dsDNA, and promotes strand exchange between ssDNA and dsDNA with long DNA substrates of several thousand base pairs. The presence of the replication protein A is not required for this activity. Seems to be required for homologous pairing and subsequent chromosome segregation during male meiosis. May be not directly required for homologous pairing during male meiosis. Required for synaptonemal complex assembly and crossover formation. Functions redundantly with DMC1A. The protein is Meiotic recombination protein DMC1 homolog B of Oryza sativa subsp. japonica (Rice).